The chain runs to 350 residues: MSELALRHDWQRDEIEALFALPMNDLLFKAHSIHRQHFDPNEVQISRLLSIKTGACPEDCKYCPQSARYDTGLEKERLIEIEKVLTEARAAKAAGASRFCMGAAWRNPHERDMPYLKDMVSEVKAMGMETCMTLGMLSESQAKDLADAGLDYYNHNLDTSPEYYGDIITTRTYQDRLNTLDNVRAAGMKVCSGGIVGMGEQASDRAGLLQQLANMAKHPESVPINMLVKVAGTPFENLDDLDPLEFVRTIAVARIVMPLSRVRLSAGREKMTDELQAMCFFAGANSIFYGCKLLTTSNPEENEDMTLFKRLGLHPEQGKAGTVEEDKAVFAKAQAVKDKASQPFYDAAAL.

The Radical SAM core domain maps to 41–265; the sequence is NEVQISRLLS…VMPLSRVRLS (225 aa). The [4Fe-4S] cluster site is built by cysteine 56, cysteine 60, and cysteine 63. Positions 100, 131, 191, and 263 each coordinate [2Fe-2S] cluster.

Belongs to the radical SAM superfamily. Biotin synthase family. As to quaternary structure, homodimer. Requires [4Fe-4S] cluster as cofactor. [2Fe-2S] cluster serves as cofactor.

It carries out the reaction (4R,5S)-dethiobiotin + (sulfur carrier)-SH + 2 reduced [2Fe-2S]-[ferredoxin] + 2 S-adenosyl-L-methionine = (sulfur carrier)-H + biotin + 2 5'-deoxyadenosine + 2 L-methionine + 2 oxidized [2Fe-2S]-[ferredoxin]. The protein operates within cofactor biosynthesis; biotin biosynthesis; biotin from 7,8-diaminononanoate: step 2/2. Its function is as follows. Catalyzes the conversion of dethiobiotin (DTB) to biotin by the insertion of a sulfur atom into dethiobiotin via a radical-based mechanism. The chain is Biotin synthase from Shewanella loihica (strain ATCC BAA-1088 / PV-4).